Consider the following 299-residue polypeptide: 4-diphosphocytidyl-2-C-methyl-D-erythritol kinase (299 aa).

Lysine 19 is an active-site residue. An ATP-binding site is contributed by proline 110 to alanine 120. Aspartate 152 is an active-site residue.

The protein belongs to the GHMP kinase family. IspE subfamily.

The catalysed reaction is 4-CDP-2-C-methyl-D-erythritol + ATP = 4-CDP-2-C-methyl-D-erythritol 2-phosphate + ADP + H(+). It functions in the pathway isoprenoid biosynthesis; isopentenyl diphosphate biosynthesis via DXP pathway; isopentenyl diphosphate from 1-deoxy-D-xylulose 5-phosphate: step 3/6. Functionally, catalyzes the phosphorylation of the position 2 hydroxy group of 4-diphosphocytidyl-2C-methyl-D-erythritol. The protein is 4-diphosphocytidyl-2-C-methyl-D-erythritol kinase of Agrobacterium fabrum (strain C58 / ATCC 33970) (Agrobacterium tumefaciens (strain C58)).